Reading from the N-terminus, the 366-residue chain is 15-cis-zeta-carotene isomerase, chloroplastic (366 aa).

The transit peptide at 1–45 directs the protein to the chloroplast; sequence MASQLRLHLAATPPLLPHRRPHLARPLCPTLNPIRAPLPPLSRVL. 6 helical membrane passes run 94 to 114, 136 to 156, 171 to 191, 203 to 223, 260 to 280, and 338 to 358; these read SWAY…VLWI, EVVM…MASL, VLFA…FINH, GITG…FFLY, VIWC…AASV, and LPYV…PLMQ.

In terms of tissue distribution, expressed in leaves and roots, and at lower levels in embryos and endosperm.

Its subcellular location is the plastid. The protein resides in the chloroplast membrane. The enzyme catalyses 9,9',15-tri-cis-zeta-carotene = 9,9'-di-cis-zeta-carotene. Functionally, isomerase involved in the biosynthesis of carotenoids. Catalyzes the cis- to trans-conversion of the 15-cis-bond in 9,15,9'-tri-cis-zeta-carotene. The sequence is that of 15-cis-zeta-carotene isomerase, chloroplastic from Zea mays (Maize).